The following is a 1073-amino-acid chain: Serine/threonine-protein phosphatase 6 regulatory ankyrin repeat subunit C (1073 aa).

ANK repeat units follow at residues T7 to V36, E40 to A69, V73 to A102, Y106 to V135, T139 to T168, K172 to C201, K205 to E234, F238 to Q267, K271 to F301, E305 to C334, Y338 to R367, H371 to I400, L422 to R451, F455 to E484, K488 to L544, Q548 to D578, I583 to V612, K616 to V645, R650 to I679, H686 to A715, R719 to C748, K752 to P781, S789 to L818, N821 to N851, K856 to T885, L889 to V919, N923 to L952, and A959 to A988.

As to quaternary structure, protein phosphatase 6 (PP6) holoenzyme is proposed to be a heterotrimeric complex formed by the catalytic subunit, a SAPS domain-containing subunit (PP6R) and an ankyrin repeat-domain containing regulatory subunit (ARS).

In terms of biological role, putative regulatory subunit of protein phosphatase 6 (PP6) that may be involved in the recognition of phosphoprotein substrates. This chain is Serine/threonine-protein phosphatase 6 regulatory ankyrin repeat subunit C (ANKRD52), found in Gallus gallus (Chicken).